A 534-amino-acid polypeptide reads, in one-letter code: uncharacterized protein (534 aa).

Disordered stretches follow at residues 1-93 (MSSS…DDTG), 123-260 (SPES…LSSA), 313-349 (AAAT…TFPS), and 383-505 (PWGA…QGCP). The span at 35-45 (GPGPDPGPEPG) shows a compositional bias: pro residues. 2 positions are modified to phosphoserine: serine 87 and serine 123. Residues 145-161 (RGAAAQRCGEAARAEAG) show a composition bias toward low complexity. Basic and acidic residues predominate over residues 230–239 (SPKDPRDTPR).

This is an uncharacterized protein from Bos taurus (Bovine).